The following is a 319-amino-acid chain: Putative G-protein coupled receptor B0244.7 (319 aa).

The N-linked (GlcNAc...) asparagine glycan is linked to asparagine 28. The next 6 membrane-spanning stretches (helical) occupy residues 49–69, 107–127, 131–151, 166–186, 206–226, and 261–281; these read AIFI…IYIF, LPVI…FIIF, SFLS…IAVV, VLLI…CGIV, GPVL…CLVI, and LFAG…SAII.

It belongs to the G-protein coupled receptor 1 family. B0244 subfamily.

The protein localises to the cell membrane. The sequence is that of Putative G-protein coupled receptor B0244.7 from Caenorhabditis elegans.